We begin with the raw amino-acid sequence, 89 residues long: Ubiquinol-cytochrome-c reductase complex assembly factor 3 (89 aa).

Residues 1 to 7 lie on the Mitochondrial matrix side of the membrane; the sequence is MEVARKA. The chain crosses the membrane as a helical span at residues 8–28; that stretch reads LVAVAVLGGGAGVGSILFALV. A mediates lipid-binding region spans residues 23-80; it reads ILFALVTPGELQKQSMLQEMPERDSRRRDEAVRTTELVMATLKDAAATKENVAWRRNW. Over 29–89 the chain is Mitochondrial intermembrane; that stretch reads TPGELQKQSM…WTVSGDGRSA (61 aa).

It belongs to the UQCC3 family. As to quaternary structure, associates with the ubiquinol-cytochrome c reductase complex (mitochondrial respiratory chain complex III(CIII) or cytochrome b-c1 complex). Interacts with UQCC1. Forms a complex, named COMC, composed of UQCC1, UQCC2; UQCC3 and UQCC4; mediates MT-CYB hemylation and association with the first nuclear-encoded complex III subunit UQCRQ. Probably cleaved by OMA1 under mitochondrial stress conditions.

The protein localises to the mitochondrion inner membrane. Required for the assembly of the ubiquinol-cytochrome c reductase complex (mitochondrial respiratory chain complex III or cytochrome b-c1 complex), mediating cytochrome b recruitment and probably stabilization within the complex. Thereby, plays an important role in ATP production by mitochondria. Cardiolipin-binding protein, it may also control the cardiolipin composition of mitochondria membranes and their morphology. This is Ubiquinol-cytochrome-c reductase complex assembly factor 3 from Mus musculus (Mouse).